Reading from the N-terminus, the 363-residue chain is Fructose-1,6-bisphosphatase 1 (363 aa).

V2 carries the post-translational modification N-acetylvaline. Residues 18-22 and 28-32 each bind AMP; these read VLEEG and TGEMT. Residues D69 and E98 each contribute to the Mg(2+) site. 113-114 provides a ligand contact to AMP; it reads KY. Mg(2+) contacts are provided by D119, L121, and D122. 122-125 provides a ligand contact to substrate; that stretch reads DGSS. Position 141 (R141) interacts with AMP. The residue at position 151 (K151) is an N6-succinyllysine. Residues 213–216, 244–249, Y265, and 275–277 contribute to the substrate site; these read NEGY, RYVGSM, and KLR. Phosphotyrosine is present on residues Y216, Y245, and Y265. E281 is a binding site for Mg(2+). 2 positions are modified to phosphoserine: S339 and S353.

The protein belongs to the FBPase class 1 family. Homotetramer. The cofactor is Mg(2+).

The enzyme catalyses beta-D-fructose 1,6-bisphosphate + H2O = beta-D-fructose 6-phosphate + phosphate. It participates in carbohydrate biosynthesis; gluconeogenesis. Its activity is regulated as follows. Subject to complex allosteric regulation. The enzyme can assume an active R-state, or an inactive T-state. Intermediate conformations may exist. AMP acts as an allosteric inhibitor. AMP binding affects the turnover of bound substrate and not the affinity for substrate. Fructose 2,6-bisphosphate acts as a competitive inhibitor. Fructose 2,6-bisphosphate and AMP have synergistic effects. Functionally, catalyzes the hydrolysis of fructose 1,6-bisphosphate to fructose 6-phosphate in the presence of divalent cations, acting as a rate-limiting enzyme in gluconeogenesis. Plays a role in regulating glucose sensing and insulin secretion of pancreatic beta-cells. Appears to modulate glycerol gluconeogenesis in liver. Important regulator of appetite and adiposity; increased expression of the protein in liver after nutrient excess increases circulating satiety hormones and reduces appetite-stimulating neuropeptides and thus seems to provide a feedback mechanism to limit weight gain. The chain is Fructose-1,6-bisphosphatase 1 (Fbp1) from Rattus norvegicus (Rat).